Consider the following 123-residue polypeptide: Ribosome-binding factor A (123 aa).

It belongs to the RbfA family. Monomer. Binds 30S ribosomal subunits, but not 50S ribosomal subunits or 70S ribosomes.

The protein localises to the cytoplasm. One of several proteins that assist in the late maturation steps of the functional core of the 30S ribosomal subunit. Associates with free 30S ribosomal subunits (but not with 30S subunits that are part of 70S ribosomes or polysomes). Required for efficient processing of 16S rRNA. May interact with the 5'-terminal helix region of 16S rRNA. This is Ribosome-binding factor A from Legionella pneumophila (strain Paris).